A 323-amino-acid chain; its full sequence is Acetyl-coenzyme A carboxylase carboxyl transferase subunit alpha (323 aa).

Positions 39 to 293 (RLSKKSQQLT…RRALADSLRQ (255 aa)) constitute a CoA carboxyltransferase C-terminal domain.

The protein belongs to the AccA family. In terms of assembly, acetyl-CoA carboxylase is a heterohexamer composed of biotin carboxyl carrier protein (AccB), biotin carboxylase (AccC) and two subunits each of ACCase subunit alpha (AccA) and ACCase subunit beta (AccD).

The protein localises to the cytoplasm. The enzyme catalyses N(6)-carboxybiotinyl-L-lysyl-[protein] + acetyl-CoA = N(6)-biotinyl-L-lysyl-[protein] + malonyl-CoA. It participates in lipid metabolism; malonyl-CoA biosynthesis; malonyl-CoA from acetyl-CoA: step 1/1. Its function is as follows. Component of the acetyl coenzyme A carboxylase (ACC) complex. First, biotin carboxylase catalyzes the carboxylation of biotin on its carrier protein (BCCP) and then the CO(2) group is transferred by the carboxyltransferase to acetyl-CoA to form malonyl-CoA. The chain is Acetyl-coenzyme A carboxylase carboxyl transferase subunit alpha from Paraburkholderia phymatum (strain DSM 17167 / CIP 108236 / LMG 21445 / STM815) (Burkholderia phymatum).